A 969-amino-acid polypeptide reads, in one-letter code: Alanine--tRNA ligase (969 aa).

Residues 1–8 constitute a mitochondrion transit peptide; it reads MIKTLLRR. 4 residues coordinate Zn(2+): H616, H620, C735, and H739.

This sequence belongs to the class-II aminoacyl-tRNA synthetase family. As to quaternary structure, monomer. It depends on Zn(2+) as a cofactor.

The protein localises to the mitochondrion. It is found in the cytoplasm. It carries out the reaction tRNA(Ala) + L-alanine + ATP = L-alanyl-tRNA(Ala) + AMP + diphosphate. Functionally, catalyzes the attachment of alanine to tRNA(Ala) in a two-step reaction: alanine is first activated by ATP to form Ala-AMP and then transferred to the acceptor end of tRNA(Ala). Also edits incorrectly charged tRNA(Ala) via its editing domain. The sequence is that of Alanine--tRNA ligase from Candida albicans (strain SC5314 / ATCC MYA-2876) (Yeast).